A 180-amino-acid chain; its full sequence is MFHATTILAYKGKNKSVIGGDGQVSFGNTVLKNNAVKIRKLNNGKVLAGFAGSTADAFNLFDMFEKLLSSSKGDLLKAAIDFSKEWRKDKYLRKLEAMMLVLDRNHIFLLSGTGDVVEPEDGAIAAIGSGGNYALSAARALAKHSNLDEENLVKESLQIAGEICIYTNTNIKTYVIEDDK.

Thr-5 is a catalytic residue. Na(+) is bound by residues Gly-161, Cys-164, and Thr-167.

This sequence belongs to the peptidase T1B family. HslV subfamily. A double ring-shaped homohexamer of HslV is capped on each side by a ring-shaped HslU homohexamer. The assembly of the HslU/HslV complex is dependent on binding of ATP.

The protein resides in the cytoplasm. It catalyses the reaction ATP-dependent cleavage of peptide bonds with broad specificity.. Allosterically activated by HslU binding. Functionally, protease subunit of a proteasome-like degradation complex believed to be a general protein degrading machinery. In Campylobacter lari (strain RM2100 / D67 / ATCC BAA-1060), this protein is ATP-dependent protease subunit HslV.